We begin with the raw amino-acid sequence, 39 residues long: TIINVKCTSPKQCSKPCKELYGSSAGAKCMNGKCKCYNN.

3 cysteine pairs are disulfide-bonded: Cys7–Cys29, Cys13–Cys34, and Cys17–Cys36. The interval Gly26–Cys34 is interaction with Ca(2+)-activated K(+) channels. Asparagine amide is present on Asn39.

It belongs to the short scorpion toxin superfamily. Potassium channel inhibitor family. Alpha-KTx 02 subfamily. In terms of tissue distribution, expressed by the venom gland.

Its subcellular location is the secreted. Its function is as follows. Blocks voltage-gated potassium channels (mKv1.1/KCNA1 (Kd&gt;25 nM), rKv1.2/KCNA2 (Kd=2 nM), mKv1.3/KCNA3 (Kd=1 nM), hKv1.5/KCNA5 (Kd&gt;25 nM) and mKv3.1/KCNC1 (Kd&gt;25 nM)) and calcium-activated potassium channels (KCa1.1/KCNMA1 and KCa3.1/KCNN4, Kd&gt;25 nM). The polypeptide is Potassium channel toxin alpha-KTx 2.1 (Centruroides noxius (Mexican scorpion)).